A 173-amino-acid chain; its full sequence is Transmembrane protein 278 (173 aa).

The span at 1-14 (MSEQERETEEDEGV) shows a compositional bias: acidic residues. Positions 1–25 (MSEQERETEEDEGVASDTAPMLPRR) are disordered. 3 consecutive transmembrane segments (helical) span residues 31–51 (HISV…VLSG), 53–73 (ALVG…LVLL), and 107–127 (AALI…AAAA). Positions 141-165 (DPARTPAPRRPPRSSGDLADGHPDE) are disordered.

Belongs to the TMEM88 family.

It localises to the membrane. The chain is Transmembrane protein 278 (Tmem278) from Mus musculus (Mouse).